Consider the following 405-residue polypeptide: Na(+)-translocating NADH-quinone reductase subunit F (405 aa).

A helical transmembrane segment spans residues Ile3–Phe23. One can recognise a 2Fe-2S ferredoxin-type domain in the interval Gly32–Val124. The [2Fe-2S] cluster site is built by Cys67, Cys73, Cys76, and Cys108. One can recognise an FAD-binding FR-type domain in the interval Val127–Lys267.

Belongs to the NqrF family. As to quaternary structure, composed of six subunits; NqrA, NqrB, NqrC, NqrD, NqrE and NqrF. [2Fe-2S] cluster is required as a cofactor. FAD serves as cofactor.

It localises to the cell inner membrane. It catalyses the reaction a ubiquinone + n Na(+)(in) + NADH + H(+) = a ubiquinol + n Na(+)(out) + NAD(+). NQR complex catalyzes the reduction of ubiquinone-1 to ubiquinol by two successive reactions, coupled with the transport of Na(+) ions from the cytoplasm to the periplasm. The first step is catalyzed by NqrF, which accepts electrons from NADH and reduces ubiquinone-1 to ubisemiquinone by a one-electron transfer pathway. In Neisseria meningitidis serogroup C / serotype 2a (strain ATCC 700532 / DSM 15464 / FAM18), this protein is Na(+)-translocating NADH-quinone reductase subunit F.